Reading from the N-terminus, the 285-residue chain is Elongation factor Ts (285 aa).

An involved in Mg(2+) ion dislocation from EF-Tu region spans residues 84 to 87 (TDFV).

The protein belongs to the EF-Ts family.

The protein localises to the cytoplasm. In terms of biological role, associates with the EF-Tu.GDP complex and induces the exchange of GDP to GTP. It remains bound to the aminoacyl-tRNA.EF-Tu.GTP complex up to the GTP hydrolysis stage on the ribosome. The chain is Elongation factor Ts from Bifidobacterium animalis subsp. lactis (strain AD011).